The following is a 544-amino-acid chain: MTTPDLEDKSFDSFGLDDRLLSGLAACDMKQPTLIQNTTIPLALDKGVDITAKAVTGSGKTVAYLLPIFELMLRAEKEKRDIQTALIVVPTRELCEQVSKVITKLTQFCPHLKSLNVTQQLGDDVISSLLEEKPSIIVGTPSRLLKYAKEMDCSKVGYLVIDEADLLLSYGYKEDLIELSEMLPKTKHTFIMSATLNKESDLMKQQFCRSTVASVAVTAAEEERKLLQYYVKCSERDKFLLAYVMFKLQLVKGKTIVFVNEIDRCYRLRLFLEQFGIKACVLNSELPIASRLHIVEQFNKGVFNLLICTDEANKLAEASKSASKQTKEVSRAHEYSSTRGLDFMNVAFVLNFDLPLSSRAYVHRVGRTARANKAGTALSFVVPADQWGKDKVAKLDTAKRDEKVLKKIIKNQESQNMEIKPYSFDMKQVEGFRYRMDDAFRAVTTVGVREARVKEIKTELLNSERLARHFDENPDDLKALRHDKELHTSKVQAHMKRVPDYLLGRKGKLDPNVFVPFRKDDNKIHKKYTKKKKGGDPLKFKKRK.

The Q motif motif lies at 9–37; sequence KSFDSFGLDDRLLSGLAACDMKQPTLIQN. A Helicase ATP-binding domain is found at 41–214; the sequence is PLALDKGVDI…QQFCRSTVAS (174 aa). Residue 54–61 coordinates ATP; the sequence is AVTGSGKT. A DEAD box motif is present at residues 162-165; sequence DEAD. Residues 225–430 form the Helicase C-terminal domain; the sequence is KLLQYYVKCS…PYSFDMKQVE (206 aa). The segment at 525-544 is disordered; it reads HKKYTKKKKGGDPLKFKKRK. The segment covering 534–544 has biased composition (basic and acidic residues); that stretch reads GGDPLKFKKRK.

It belongs to the DEAD box helicase family. DDX56/DBP9 subfamily.

It is found in the nucleus. Its subcellular location is the nucleolus. It carries out the reaction ATP + H2O = ADP + phosphate + H(+). ATP-binding RNA helicase involved in the biogenesis of 60S ribosomal subunits and is required for the normal formation of 25S and 5.8S rRNAs. This Yarrowia lipolytica (strain CLIB 122 / E 150) (Yeast) protein is ATP-dependent RNA helicase DBP9 (DBP9).